The chain runs to 253 residues: E3 ubiquitin-protein ligase MARCHF3 (253 aa).

The RING-CH-type zinc finger occupies 63-123; sequence SPFNDRPMCR…ELCHFRFAVE (61 aa). Zn(2+)-binding residues include cysteine 71, cysteine 74, cysteine 87, cysteine 89, histidine 97, cysteine 100, cysteine 113, and cysteine 116. Helical transmembrane passes span 145 to 165 and 182 to 202; these read LFGD…SGWL and AVGL…WTLV. Phosphoserine is present on residues serine 237 and serine 243.

In terms of assembly, interacts with MARCHF2 and STX6.

The protein resides in the cytoplasmic vesicle membrane. It is found in the early endosome membrane. It carries out the reaction S-ubiquitinyl-[E2 ubiquitin-conjugating enzyme]-L-cysteine + [acceptor protein]-L-lysine = [E2 ubiquitin-conjugating enzyme]-L-cysteine + N(6)-ubiquitinyl-[acceptor protein]-L-lysine.. It participates in protein modification; protein ubiquitination. Its function is as follows. E3 ubiquitin-protein ligase which may be involved in endosomal trafficking. E3 ubiquitin ligases accept ubiquitin from an E2 ubiquitin-conjugating enzyme in the form of a thioester and then directly transfer the ubiquitin to targeted substrates. The chain is E3 ubiquitin-protein ligase MARCHF3 (MARCHF3) from Bos taurus (Bovine).